A 637-amino-acid polypeptide reads, in one-letter code: Extracellular metalloproteinase 2 (637 aa).

Residues 1-20 form the signal peptide; sequence MRSFLLASLASVATLKSAQA. The propeptide occupies 21-244; that stretch reads HPAHSTRGLS…VHAVVDYSAD (224 aa). N-linked (GlcNAc...) asparagine glycosylation is found at N302, N328, N337, and N413. H430 serves as a coordination point for Zn(2+). The active site involves E431. A Zn(2+)-binding site is contributed by H434.

It belongs to the peptidase M36 family. Zn(2+) is required as a cofactor.

Its subcellular location is the secreted. Secreted metalloproteinase that allows assimilation of proteinaceous substrates. The chain is Extracellular metalloproteinase 2 (MEP2) from Phaeosphaeria nodorum (strain SN15 / ATCC MYA-4574 / FGSC 10173) (Glume blotch fungus).